A 434-amino-acid polypeptide reads, in one-letter code: MPNRKASRNAYYFFVQEKIPELRRRGLPVARVADAIPYCSSDWALLREEEKEKYAEMAREWRAAQGKDPGPSEKQKPVFTPLRRPGMLVPKQNVSPPDMSALSLKGDQALLGGIFYFLNIFSHGELPPHCEQRFLPCEIGCVKYSLQEGIMADFHSFINPGEIPRGFRFHCQAASDSSHKIPISNFERGHNQATVLQNLYRFIHPNPGNWPPIYCKSDDRTRVNWCLKHMAKASEIRQDLQLLTVEDLVVGIYQQKFLKEPSKTWIRSLLDVAMWDYSSNTRCKWHEENDILFCALAVCKKIAYCISNSLATLFGIQLTEAHVPLQDYEASNSVTPKMVVLDAGRYQKLRVGSSGFSHFNSSNEEQRSNTPIGDYPSRAKISGQNSSVRGRGITRLLESISNSSSNIHKFSNCDTSLSPYMSQKDGYKSFSSLS.

A DNA-binding region (HMG box) is located at residues 4–73 (RKASRNAYYF…AQGKDPGPSE (70 aa)). A disordered region spans residues 357–385 (SHFNSSNEEQRSNTPIGDYPSRAKISGQN).

It belongs to the maelstrom family. Interacts with SMARCB1, SIN3B and DDX4. Interacts with piRNA-associated proteins TDRD1, PIWIL1 and PIWIL2. Interacts with TEX19. Testis-specific. Expressed in various cancer cell lines, probably due to demethylation of its promoter.

The protein localises to the cytoplasm. The protein resides in the nucleus. In terms of biological role, plays a central role during spermatogenesis by repressing transposable elements and preventing their mobilization, which is essential for the germline integrity. Acts via the piRNA metabolic process, which mediates the repression of transposable elements during meiosis by forming complexes composed of piRNAs and Piwi proteins and governs the methylation and subsequent repression of transposons. Its association with piP-bodies suggests a participation in the secondary piRNAs metabolic process. Required for the localization of germ-cell factors to the meiotic nuage. In Homo sapiens (Human), this protein is Protein maelstrom homolog (MAEL).